We begin with the raw amino-acid sequence, 225 residues long: Enolase-phosphatase E1 (225 aa).

This sequence belongs to the HAD-like hydrolase superfamily. MasA/MtnC family. Monomer. Mg(2+) is required as a cofactor.

The enzyme catalyses 5-methylsulfanyl-2,3-dioxopentyl phosphate + H2O = 1,2-dihydroxy-5-(methylsulfanyl)pent-1-en-3-one + phosphate. It functions in the pathway amino-acid biosynthesis; L-methionine biosynthesis via salvage pathway; L-methionine from S-methyl-5-thio-alpha-D-ribose 1-phosphate: step 3/6. Its pathway is amino-acid biosynthesis; L-methionine biosynthesis via salvage pathway; L-methionine from S-methyl-5-thio-alpha-D-ribose 1-phosphate: step 4/6. In terms of biological role, bifunctional enzyme that catalyzes the enolization of 2,3-diketo-5-methylthiopentyl-1-phosphate (DK-MTP-1-P) into the intermediate 2-hydroxy-3-keto-5-methylthiopentenyl-1-phosphate (HK-MTPenyl-1-P), which is then dephosphorylated to form the acireductone 1,2-dihydroxy-3-keto-5-methylthiopentene (DHK-MTPene). The chain is Enolase-phosphatase E1 from Shewanella denitrificans (strain OS217 / ATCC BAA-1090 / DSM 15013).